The chain runs to 369 residues: S-(hydroxymethyl)glutathione dehydrogenase (369 aa).

C40, H62, C92, C95, C98, C106, and C169 together coordinate Zn(2+).

The protein belongs to the zinc-containing alcohol dehydrogenase family. Class-III subfamily. As to quaternary structure, homodimer. Requires Zn(2+) as cofactor.

The protein resides in the cytoplasm. The enzyme catalyses S-(hydroxymethyl)glutathione + NADP(+) = S-formylglutathione + NADPH + H(+). It catalyses the reaction S-(hydroxymethyl)glutathione + NAD(+) = S-formylglutathione + NADH + H(+). It carries out the reaction a primary alcohol + NAD(+) = an aldehyde + NADH + H(+). The catalysed reaction is a secondary alcohol + NAD(+) = a ketone + NADH + H(+). The enzyme catalyses S-nitrosoglutathione + NADH + H(+) = S-(hydroxysulfenamide)glutathione + NAD(+). Its function is as follows. Has high formaldehyde dehydrogenase activity in the presence of glutathione and catalyzes the oxidation of normal alcohols in a reaction that is not GSH-dependent. In addition, hemithiolacetals other than those formed from GSH, including omega-thiol fatty acids, also are substrates. Also acts as a S-nitroso-glutathione reductase by catalyzing the NADH-dependent reduction of S-nitrosoglutathione. The sequence is that of S-(hydroxymethyl)glutathione dehydrogenase (frmA) from Escherichia coli O1:K1 / APEC.